Here is a 246-residue protein sequence, read N- to C-terminus: MISDSMTVEEIRLHLGLALKEKDFVVDKTGVKTIEIIGASFVADEPFIFGALNDEYIQRELEWYKSKSLFVKDIPGETPKIWQQVASSKGEINSNYGWAIWSEDNYAQYDMCLAELGQNPDSRRGIMIYTRPSMQFDYNKDGMSDFMCTNTVQYLIRDKKINAVVNMRSNDVVFGFRNDYAWQKYVLDKLVSDLNAGDSTRQYKAGSIIWNVGSLHVYSRHFYLVDHWWNTGETHIVKKDYNGEWK.

The active site involves cysteine 148.

Belongs to the thymidylate synthase family.

It carries out the reaction dCMP + (6R)-5,10-methylene-5,6,7,8-tetrahydrofolate + H2O = 5-hydroxymethyl-dCMP + (6S)-5,6,7,8-tetrahydrofolate. This is Deoxycytidylate 5-hydroxymethyltransferase (42) from Escherichia coli (Bacteriophage T2).